The chain runs to 90 residues: Small ribosomal subunit protein bS16 (90 aa).

Belongs to the bacterial ribosomal protein bS16 family.

This is Small ribosomal subunit protein bS16 from Streptococcus agalactiae serotype III (strain NEM316).